The primary structure comprises 91 residues: Histone H1, sperm (91 aa).

The tract at residues 1–25 (PGSPQKRAASPRKSPRKGSPKKSPM) is disordered. The span at 9–20 (ASPRKSPRKGSP) shows a compositional bias: basic residues. Residues 18–91 (GSPKKSPMIR…TGATGRFRVG (74 aa)) enclose the H15 domain.

This sequence belongs to the histone H1/H5 family.

It localises to the nucleus. The protein resides in the chromosome. Its function is as follows. Histones H1 are necessary for the condensation of nucleosome chains into higher-order structures. This chain is Histone H1, sperm, found in Sphaerechinus granularis (Purple sea urchin).